Reading from the N-terminus, the 790-residue chain is Ribosome biogenesis protein ERB1 (790 aa).

The disordered stretch occupies residues 1 to 93; it reads MAKKNTVTGS…SDELQDDSNS (93 aa). The span at 20 to 89 shows a compositional bias: acidic residues; it reads SPEVSESEEI…SEDFSDELQD (70 aa). The required for interaction with NOP7 stretch occupies residues 255–371; the sequence is RFVPSKHEAK…LRKVPAYQEN (117 aa). The interval 371 to 407 is required for interaction with YTM1; it reads NLRERFERSLDLYLAPRVRHNKLNIDPDSLIPDLPSP. WD repeat units lie at residues 423 to 462, 470 to 510, 574 to 616, 619 to 657, 660 to 699, 703 to 743, and 759 to 790; these read GHIG…QVYH, KDDD…YEIE, QCRK…SQSP, KSKG…LTKK, PGAR…TPYK, YHEK…DLMT, and VHSL…LWTT.

Belongs to the WD repeat BOP1/ERB1 family. As to quaternary structure, component of the NOP7 complex, composed of ERB1, NOP7 and YTM1. The complex is held together by ERB1, which interacts with NOP7 via its N-terminal domain and with YTM1 via a high-affinity interaction between the seven-bladed beta-propeller domains of the 2 proteins. The NOP7 complex associates with the 66S pre-ribosome.

The protein resides in the nucleus. It is found in the nucleolus. Its subcellular location is the nucleoplasm. In terms of biological role, component of the NOP7 complex, which is required for maturation of the 25S and 5.8S ribosomal RNAs and formation of the 60S ribosome. In Meyerozyma guilliermondii (strain ATCC 6260 / CBS 566 / DSM 6381 / JCM 1539 / NBRC 10279 / NRRL Y-324) (Yeast), this protein is Ribosome biogenesis protein ERB1.